Consider the following 26-residue polypeptide: GLIGSIGKALGGLLVDVLKPKLQAAS.

Expressed by the dorsal and submental skin glands.

It localises to the secreted. In Ranoidea citropa (Australian Blue Mountains tree frog), this protein is Citropin-2.1.3.